The sequence spans 384 residues: 4-hydroxy-3-methylbut-2-en-1-yl diphosphate synthase (flavodoxin) (384 aa).

Residues C280, C283, C315, and E322 each contribute to the [4Fe-4S] cluster site.

Belongs to the IspG family. Requires [4Fe-4S] cluster as cofactor.

It catalyses the reaction (2E)-4-hydroxy-3-methylbut-2-enyl diphosphate + oxidized [flavodoxin] + H2O + 2 H(+) = 2-C-methyl-D-erythritol 2,4-cyclic diphosphate + reduced [flavodoxin]. It functions in the pathway isoprenoid biosynthesis; isopentenyl diphosphate biosynthesis via DXP pathway; isopentenyl diphosphate from 1-deoxy-D-xylulose 5-phosphate: step 5/6. Functionally, converts 2C-methyl-D-erythritol 2,4-cyclodiphosphate (ME-2,4cPP) into 1-hydroxy-2-methyl-2-(E)-butenyl 4-diphosphate. In Frankia casuarinae (strain DSM 45818 / CECT 9043 / HFP020203 / CcI3), this protein is 4-hydroxy-3-methylbut-2-en-1-yl diphosphate synthase (flavodoxin).